A 1002-amino-acid polypeptide reads, in one-letter code: Vacuolar protein sorting-associated protein 18 homolog (1002 aa).

The residue at position 344 (Ser344) is a Phosphoserine. One copy of the CHCR repeat lies at Leu650–Lys804. The stretch at Phe827–Glu880 forms a coiled coil. The RING-type; degenerate zinc-finger motif lies at Cys885–Cys924.

Belongs to the VPS18 family. As to quaternary structure, component of the class C core vacuole/endosome tethering (CORVET) complex composed of at least Vps8, dor/Vps18, car/Vps33A and Vps16A; unlike in other species, Vps11 is not part of the Drosophila complex. Due to the reduced number of components the Drosophila CORVET complex is often referred to as the miniCORVET complex. Interacts with car/Vps33A. Interacts with ema. Component of the homotypic fusion and vacuole protein sorting (HOPS) complex, composed of Vps16A, car/Vps33A, dor/Vps18, Vps39, Vps11 and lt/Vps41. The tethering complex core made up of Vps16A, car/Vps33A and dor/Vps18 and shared by both HOPS and CORVET, preferentially associates with CORVET-specific Vps8 over HOPS-specific lt/Vps41. Interacts with Syx17 (via SNARE domain); the interaction may involve multiple components of the HOPS complex and may promote assembly of the Syx17-Snap29-Vamp7 trans-SNARE complex.

It is found in the early endosome. Its subcellular location is the late endosome membrane. It localises to the lysosome membrane. The protein localises to the cytoplasmic vesicle. The protein resides in the autophagosome. Core component of the class C core vacuole/endosome tethering (CORVET) and the homotypic fusion and vacuole protein sorting (HOPS) tethering complexes involved in endo-lysosomal vesicle trafficking and lysosome biogenesis. The CORVET complex facilitates docking and fusion of endosomal vesicles during endosome maturation, acts upstream of HOPS, but is not involved in autophagic flux. The CORVET complex may cooperate with the early endosomal tether Rbsn-5 to mediate endosomal fusion. The HOPS complex facilitates docking and fusion of lysosomes with late endosomes and several other types of vesicles. The HOPS complex is also involved in autophagy and crinophagy (the elimination of unused secretory granules through their fusion with lysosomes). The HOPS complex mediates autophagocitic flux, probably by binding autophagosome-associated Syx17/syntaxin 17, promoting assembly of the trans-SNARE complex and instigating autophagosome-lysosome fusion. Independent of Syx17/syntaxin 17, HOPS is involved in biosynthetic transport to lysosomes and lysosome-related organelles such as eye-pigment granules. Required for endocytic degradation of boss/bride of sevenless and N/Notch in developing ommatidia. Required for autophagocytosis-dependent remodeling of myofibrils and transverse-tubules (T-tubules) during metamorphosis. In larval neuromuscular junctions, essential for endosomal sorting that traffics old or dysfunctional synaptic vesicle proteins through a degradative endolysosomal route. Required to maintain normal levels of rush, which functions in endosome formation and trafficking. This Drosophila melanogaster (Fruit fly) protein is Vacuolar protein sorting-associated protein 18 homolog.